Consider the following 532-residue polypeptide: Phosphoenolpyruvate carboxykinase (ATP) (532 aa).

Substrate is bound by residues R60, Y194, and K200. Residues K200, H219, and 237 to 245 (GLSGTGKTT) each bind ATP. Mn(2+)-binding residues include K200 and H219. D258 is a Mn(2+) binding site. Positions 286, 324, and 449 each coordinate ATP. Substrate is bound at residue R324.

Belongs to the phosphoenolpyruvate carboxykinase (ATP) family. Requires Mn(2+) as cofactor.

It localises to the cytoplasm. It catalyses the reaction oxaloacetate + ATP = phosphoenolpyruvate + ADP + CO2. It functions in the pathway carbohydrate biosynthesis; gluconeogenesis. In terms of biological role, involved in the gluconeogenesis. Catalyzes the conversion of oxaloacetate (OAA) to phosphoenolpyruvate (PEP) through direct phosphoryl transfer between the nucleoside triphosphate and OAA. This chain is Phosphoenolpyruvate carboxykinase (ATP), found in Cereibacter sphaeroides (strain ATCC 17025 / ATH 2.4.3) (Rhodobacter sphaeroides).